The following is a 306-amino-acid chain: Solute carrier family 25 member 48 (306 aa).

Solcar repeat units follow at residues 3 to 86 (SFQL…TQRF), 101 to 200 (RSLS…LSEW), and 209 to 296 (PSPY…SLKA). A run of 6 helical transmembrane segments spans residues 9–29 (FVAGWIGGVASVIVGYPLDTV), 61–81 (GMSFPLASIAIYNSVVFGVFS), 107–127 (LLASMLTGVVSVGLGGPVELI), 184–204 (IPGYCFYFIPYVFLSEWITPE), 212–232 (YAAWLAGGIAGAISWGTATPM), and 272–290 (ITVNAVRGFPMSAAMFLGY).

The protein belongs to the mitochondrial carrier (TC 2.A.29) family.

The protein localises to the mitochondrion inner membrane. The polypeptide is Solute carrier family 25 member 48 (Slc25a48) (Mus musculus (Mouse)).